Reading from the N-terminus, the 366-residue chain is MTRVYNFSAGPAALPEAVLQQAAEEMLDWQGAGCGVMEMSHRGKEFTSIVAQAEADLRELLAIPDNYRVLFLQGGATQQFAQIPMNLLAGGSADYLVTGSWSKKAYGEAKHLAGALGGAVRLAGSTETAGFTRLLRTEELDLDPRARYLHLCTNETIHGVELCEVSRLPDTGVPLVADMSSHILSRPLDIGRYGLIYAGAQKNIGPSGLVVVIVREDLLGHASPVTPTIMDYRVMAENGSMLNTPPTYAIYIAGLVFRWLKAQGGLAAVEANNIAKSDLLYDFLDASDFYENRVAQDSRSRMNIPFLLRDDALNDPFLAGAKAAGLTQLKGHKSVGGMRASIYNAMPLAGVQALVDYMRDFSARNG.

Arg42 is an L-glutamate binding site. Pyridoxal 5'-phosphate-binding positions include 76–77 (AT), Trp101, Thr156, Asp178, and Gln201. At Lys202 the chain carries N6-(pyridoxal phosphate)lysine. 243-244 (NT) contacts pyridoxal 5'-phosphate.

This sequence belongs to the class-V pyridoxal-phosphate-dependent aminotransferase family. SerC subfamily. Homodimer. Pyridoxal 5'-phosphate serves as cofactor.

It localises to the cytoplasm. The catalysed reaction is O-phospho-L-serine + 2-oxoglutarate = 3-phosphooxypyruvate + L-glutamate. It catalyses the reaction 4-(phosphooxy)-L-threonine + 2-oxoglutarate = (R)-3-hydroxy-2-oxo-4-phosphooxybutanoate + L-glutamate. Its pathway is amino-acid biosynthesis; L-serine biosynthesis; L-serine from 3-phospho-D-glycerate: step 2/3. It functions in the pathway cofactor biosynthesis; pyridoxine 5'-phosphate biosynthesis; pyridoxine 5'-phosphate from D-erythrose 4-phosphate: step 3/5. Functionally, catalyzes the reversible conversion of 3-phosphohydroxypyruvate to phosphoserine and of 3-hydroxy-2-oxo-4-phosphonooxybutanoate to phosphohydroxythreonine. The polypeptide is Phosphoserine aminotransferase (Aromatoleum aromaticum (strain DSM 19018 / LMG 30748 / EbN1) (Azoarcus sp. (strain EbN1))).